The primary structure comprises 1377 residues: DNA-directed RNA polymerase subunit beta (1377 aa).

The protein belongs to the RNA polymerase beta chain family. The RNAP catalytic core consists of 2 alpha, 1 beta, 1 beta' and 1 omega subunit. When a sigma factor is associated with the core the holoenzyme is formed, which can initiate transcription.

The enzyme catalyses RNA(n) + a ribonucleoside 5'-triphosphate = RNA(n+1) + diphosphate. DNA-dependent RNA polymerase catalyzes the transcription of DNA into RNA using the four ribonucleoside triphosphates as substrates. This chain is DNA-directed RNA polymerase subunit beta, found in Brucella canis (strain ATCC 23365 / NCTC 10854 / RM-666).